Consider the following 361-residue polypeptide: Peptide chain release factor 1 (361 aa).

Position 240 is an N5-methylglutamine (Q240).

This sequence belongs to the prokaryotic/mitochondrial release factor family. Methylated by PrmC. Methylation increases the termination efficiency of RF1.

It is found in the cytoplasm. Functionally, peptide chain release factor 1 directs the termination of translation in response to the peptide chain termination codons UAG and UAA. The sequence is that of Peptide chain release factor 1 from Mycobacterium leprae (strain Br4923).